The following is a 293-amino-acid chain: MRFVIVTGLSGAGKTQAIRNLEDLGFFCVDNLPPTLIPKFAEACYQTDGKIDKIALVIDIRGGQFFDDIFESLNYLQKQGYKYEILFLDASDEVLIKRFKESRRKHPLAPDGRILNGILMERSRLREIKDRSDNIIDTSKLATRELREEITRIYSEEGQMETQLIVTVLSFGFKYGIPVDSDLVFDVRFLPNPFYIPELKNHSGRDKIVVDYIMDFKETVKFIDKLEDMLEFLIPNYLKEGKRQLIVSIGCTGGRHRSVTIANTIYNRLKDNGHRVNIDHRDIEEDIKGGKKL.

8 to 15 (GLSGAGKT) contacts ATP. 59 to 62 (DIRG) provides a ligand contact to GTP.

This sequence belongs to the RapZ-like family.

Displays ATPase and GTPase activities. The protein is Nucleotide-binding protein CKR_3143 of Clostridium kluyveri (strain NBRC 12016).